Here is a 126-residue protein sequence, read N- to C-terminus: Large-conductance mechanosensitive channel (126 aa).

2 helical membrane-spanning segments follow: residues 17 to 37 (VDLA…SSFI) and 70 to 90 (GLFL…FLII).

It belongs to the MscL family. Homopentamer.

The protein localises to the cell inner membrane. Functionally, channel that opens in response to stretch forces in the membrane lipid bilayer. May participate in the regulation of osmotic pressure changes within the cell. The polypeptide is Large-conductance mechanosensitive channel (Flavobacterium johnsoniae (strain ATCC 17061 / DSM 2064 / JCM 8514 / BCRC 14874 / CCUG 350202 / NBRC 14942 / NCIMB 11054 / UW101) (Cytophaga johnsonae)).